Here is a 391-residue protein sequence, read N- to C-terminus: Apolipoprotein A-IV (391 aa).

The first 20 residues, 1-20 (MFLKAVVLTVALVAITGTQA), serve as a signal peptide directing secretion. 13 consecutive repeat copies span residues 33 to 54 (DYFTQLSNNAKEAVEQLQKTDV), 60 to 81 (TLFQDKLGNINTYADDLQNKLV), 82 to 103 (PFAVQLSGHLTKETERVREEIQ), 115 to 136 (PHANKVSQMFGDNVQKLQEHLR), 137 to 158 (PYATDLQAQINAQTQDMKRQLT), 159 to 180 (PYIQRMQTTIQDNVENLQSSMV), 181 to 202 (PFANELKEKFNQNMEGLKGQLT), 203 to 224 (PRANELKATIDQNLEDLRSRLA), 225 to 246 (PLAEGVQEKLNHQMEGLAFQMK), 247 to 268 (KNAEELQTKVSTNIDQLQKNLA), 269 to 286 (PLVEDVQSKLKGNTEGLQ), 287 to 308 (KSLEDLNKQLDQQVEVFRRAVE), and 309 to 330 (PLGDKFNMALVQQMEKFRQQLG). Residues 33–330 (DYFTQLSNNA…QMEKFRQQLG (298 aa)) form a 13 X 22 AA approximate tandem repeats region. Position 333 is a phosphoserine (S333). Residues 354-391 (FMSTLQKKGSPDQPLALPLPEQVQEQVQEQVQPKPLES) are disordered. The span at 371-391 (PLPEQVQEQVQEQVQPKPLES) shows a compositional bias: low complexity.

Belongs to the apolipoprotein A1/A4/E family. Homodimer. Secreted in plasma.

It is found in the secreted. May have a role in chylomicrons and VLDL secretion and catabolism. Required for efficient activation of lipoprotein lipase by ApoC-II; potent activator of LCAT. Apoa-IV is a major component of HDL and chylomicrons. This is Apolipoprotein A-IV (Apoa4) from Rattus norvegicus (Rat).